We begin with the raw amino-acid sequence, 141 residues long: D-aminoacyl-tRNA deacylase (141 aa).

Residues 133-134 (GP) carry the Gly-cisPro motif, important for rejection of L-amino acids motif.

This sequence belongs to the DTD family. As to quaternary structure, homodimer.

It localises to the cytoplasm. It carries out the reaction glycyl-tRNA(Ala) + H2O = tRNA(Ala) + glycine + H(+). The catalysed reaction is a D-aminoacyl-tRNA + H2O = a tRNA + a D-alpha-amino acid + H(+). Functionally, an aminoacyl-tRNA editing enzyme that deacylates mischarged D-aminoacyl-tRNAs. Also deacylates mischarged glycyl-tRNA(Ala), protecting cells against glycine mischarging by AlaRS. Acts via tRNA-based rather than protein-based catalysis; rejects L-amino acids rather than detecting D-amino acids in the active site. By recycling D-aminoacyl-tRNA to D-amino acids and free tRNA molecules, this enzyme counteracts the toxicity associated with the formation of D-aminoacyl-tRNA entities in vivo and helps enforce protein L-homochirality. This is D-aminoacyl-tRNA deacylase from Streptomyces coelicolor (strain ATCC BAA-471 / A3(2) / M145).